Here is a 473-residue protein sequence, read N- to C-terminus: PTS system trehalose-specific EIIBC component (473 aa).

One can recognise a PTS EIIB type-1 domain in the interval 1 to 89; sequence MMSKINQTDI…IASTGQAQVD (89 aa). The Cytoplasmic segment spans residues 1-110; that stretch reads MMSKINQTDI…MKWHEQLISH (110 aa). Cysteine 29 serves as the catalytic Phosphocysteine intermediate; for EIIB activity. The residue at position 29 (cysteine 29) is a Phosphocysteine; by EIIA. The PTS EIIC type-1 domain maps to 109–473; sequence SHFAVIFFPL…KYRLGTLDIV (365 aa). The chain crosses the membrane as a helical span at residues 111–131; that stretch reads FAVIFFPLLPALISGGLILGF. Residues 132 to 158 lie on the Periplasmic side of the membrane; that stretch reads RNVIGDLPMSNGQTLAQMYPSLQTIYD. The chain crosses the membrane as a helical span at residues 159-179; sequence FLWLIGEAIFFYLPVGICWSA. Topologically, residues 180 to 187 are cytoplasmic; the sequence is VKKMGGTP. A helical transmembrane segment spans residues 188–208; the sequence is ILGIVLGVTLVSPQLMNAYLL. The Periplasmic portion of the chain corresponds to 209 to 225; sequence GQQLPEVWDFGMFSIAK. A helical transmembrane segment spans residues 226–246; the sequence is VGYQAQVIPALLAGLALGVIE. Residues 247-258 lie on the Cytoplasmic side of the membrane; it reads TRLKRIVPDYLY. Residues 259-279 form a helical membrane-spanning segment; that stretch reads LVVVPVCSLILAVFLAHALIG. The Periplasmic segment spans residues 280-300; sequence PFGRMIGDGVAFAVRHLMTGS. The chain crosses the membrane as a helical span at residues 301 to 321; sequence FAPIGAALFGFLYAPLVITGV. Residues 322–340 are Cytoplasmic-facing; the sequence is HQTTLAIDLQMIQSMGGTP. The chain crosses the membrane as a helical span at residues 341-361; the sequence is VWPLIALSNIAQGSAVIGIII. The Periplasmic portion of the chain corresponds to 362 to 370; sequence SSRKHNERE. Residues 371-391 traverse the membrane as a helical segment; that stretch reads ISVPAAISAWLGVTEPAMYGI. Residues 392–398 lie on the Cytoplasmic side of the membrane; that stretch reads NLKYRFP. Residues 399–419 traverse the membrane as a helical segment; the sequence is MLCAMIGSGLAGLLCGLNGVM. Residues 420–440 lie on the Periplasmic side of the membrane; it reads ANGIGVGGLPGILSIQPSYWQ. The chain crosses the membrane as a helical span at residues 441 to 461; sequence VFALAMAIAIIIPIVLTSFIY. The Cytoplasmic portion of the chain corresponds to 462-473; sequence QRKYRLGTLDIV.

Its subcellular location is the cell inner membrane. It carries out the reaction alpha,alpha-trehalose(out) + N(pros)-phospho-L-histidyl-[protein] = alpha,alpha-trehalose 6-phosphate(in) + L-histidyl-[protein]. The phosphoenolpyruvate-dependent sugar phosphotransferase system (sugar PTS), a major carbohydrate active transport system, catalyzes the phosphorylation of incoming sugar substrates concomitantly with their translocation across the cell membrane. This system is involved in trehalose transport at low osmolarity. The polypeptide is PTS system trehalose-specific EIIBC component (treB) (Escherichia coli (strain K12)).